The following is a 993-amino-acid chain: Glycogen phosphorylase 2 (993 aa).

The disordered stretch occupies residues 1–82; sequence MEEKRSTNSP…SNQSEDPATQ (82 aa). Polar residues predominate over residues 19–48; sequence RSGSITSATSHPPRSNSNPKLVAKHQQQLY. The span at 58–77 shows a compositional bias: low complexity; it reads EQQNQQPQQQQQKQTSNQSE. K763 is modified (N6-(pyridoxal phosphate)lysine). Positions 962-981 are enriched in polar residues; that stretch reads VISGGDKTNNTLKPKQTTKG. The interval 962 to 993 is disordered; sequence VISGGDKTNNTLKPKQTTKGFNIGGQPGNPTN. Residues 983–993 show a composition bias toward gly residues; that stretch reads NIGGQPGNPTN.

It belongs to the glycogen phosphorylase family. In terms of assembly, homodimer. Pyridoxal 5'-phosphate serves as cofactor. In terms of processing, the N-terminus is blocked. Post-translationally, enzyme activity requires processing of the 113 kDa peptide to an enzymatically active 106 kDa form of the protein. Processing would occur near the middle of the Gln-rich repetitive element.

The catalysed reaction is [(1-&gt;4)-alpha-D-glucosyl](n) + phosphate = [(1-&gt;4)-alpha-D-glucosyl](n-1) + alpha-D-glucose 1-phosphate. Phosphorylase is an important allosteric enzyme in carbohydrate metabolism. Enzymes from different sources differ in their regulatory mechanisms and in their natural substrates. However, all known phosphorylases share catalytic and structural properties. The chain is Glycogen phosphorylase 2 (glpD) from Dictyostelium discoideum (Social amoeba).